Consider the following 297-residue polypeptide: Mitochondrial substrate carrier family protein P (297 aa).

3 Solcar repeats span residues 12 to 98, 104 to 189, and 201 to 293; these read KPSW…IKNH, SSSF…LKRI, and ISGT…LSNF. 6 consecutive transmembrane segments (helical) span residues 15-35, 66-86, 107-127, 165-185, 207-227, and 262-282; these read WVSF…VAPL, GIKG…PYAA, FQIF…TYPL, IQPT…TFEF, LIAG…FDVV, and ILAL…TASI.

It belongs to the mitochondrial carrier (TC 2.A.29) family.

The protein resides in the mitochondrion inner membrane. Mitochondrial solute carriers shuttle metabolites, nucleotides, and cofactors through the mitochondrial inner membrane. Required for the accumulation of coenzyme A in the mitochondrial matrix. The chain is Mitochondrial substrate carrier family protein P (mcfP) from Dictyostelium discoideum (Social amoeba).